Consider the following 347-residue polypeptide: Protein RecA (347 aa).

66–73 lines the ATP pocket; that stretch reads GPESSGKT.

The protein belongs to the RecA family.

It is found in the cytoplasm. In terms of biological role, can catalyze the hydrolysis of ATP in the presence of single-stranded DNA, the ATP-dependent uptake of single-stranded DNA by duplex DNA, and the ATP-dependent hybridization of homologous single-stranded DNAs. It interacts with LexA causing its activation and leading to its autocatalytic cleavage. The chain is Protein RecA from Methylococcus capsulatus (strain ATCC 33009 / NCIMB 11132 / Bath).